Here is a 356-residue protein sequence, read N- to C-terminus: MNRTQPLVLGIESSCDETGVGIVRGTALLSNTVSSSMEEHVRFGGVIPEIASRAHLDAFVPTLQEALADAGVQLDDVDAIAVTSGPGLAGALMVGVCAAKALAVATGKPLYAINHLVAHVGVGLLQEENTLPEHLGALLVSGGHTEILRIRSITDDVELLGSTIDDAAGEAYDKVARLLGLGYPGGPAIDKLARTGNAKAIRFPRGLTQPKYMGTADEPGPHRYDWSFSGLKTAVARCVEQFEARGDEVPVADIAAAFQEAVVDVITSKAVLACTENGITELLLGGGVAANSRLRQLTEQRCRAAGIRLTVPPLELCTDNGAMVAALGAQLVMAGIEPSGISFAPDSSMPVTTVSA.

The Fe cation site is built by His-115 and His-119. Substrate-binding positions include 139–143 (LVSGG), Asp-173, Gly-186, Asp-190, and Asn-291. Fe cation is bound at residue Asp-319.

Belongs to the KAE1 / TsaD family. Fe(2+) is required as a cofactor.

It is found in the cytoplasm. It carries out the reaction L-threonylcarbamoyladenylate + adenosine(37) in tRNA = N(6)-L-threonylcarbamoyladenosine(37) in tRNA + AMP + H(+). Its function is as follows. Required for the formation of a threonylcarbamoyl group on adenosine at position 37 (t(6)A37) in tRNAs that read codons beginning with adenine. Is involved in the transfer of the threonylcarbamoyl moiety of threonylcarbamoyl-AMP (TC-AMP) to the N6 group of A37, together with TsaE and TsaB. TsaD likely plays a direct catalytic role in this reaction. The protein is tRNA N6-adenosine threonylcarbamoyltransferase of Arthrobacter sp. (strain FB24).